We begin with the raw amino-acid sequence, 60 residues long: Metallothionein B (60 aa).

Positions 1–28 (MDPCECSKTGSCNCGGSCKCSNCACTSC) are beta. A divalent metal cation is bound by residues C4, C6, C12, C14, C18, C20, C23, C25, C28, C32, C33, C35, C36, C40, C43, C47, C49, C54, C58, and C59. The segment at 29–60 (KKSCCPCCPSDCSKCASGCVCKGKTCDTSCCQ) is alpha.

Belongs to the metallothionein superfamily. Type 1 family.

Functionally, metallothioneins have a high content of cysteine residues that bind various heavy metals. The polypeptide is Metallothionein B (mtb) (Oncorhynchus mykiss (Rainbow trout)).